The sequence spans 397 residues: Acetate kinase (397 aa).

Asn8 provides a ligand contact to Mg(2+). Residue Lys15 participates in ATP binding. Residue Arg89 coordinates substrate. Asp146 (proton donor/acceptor) is an active-site residue. Residues His206–Gly210, Asp280–Arg282, and Gly328–Asn332 each bind ATP. Glu382 serves as a coordination point for Mg(2+).

It belongs to the acetokinase family. As to quaternary structure, homodimer. It depends on Mg(2+) as a cofactor. The cofactor is Mn(2+).

Its subcellular location is the cytoplasm. The enzyme catalyses acetate + ATP = acetyl phosphate + ADP. The protein operates within metabolic intermediate biosynthesis; acetyl-CoA biosynthesis; acetyl-CoA from acetate: step 1/2. In terms of biological role, catalyzes the formation of acetyl phosphate from acetate and ATP. Can also catalyze the reverse reaction. This Leifsonia xyli subsp. xyli (strain CTCB07) protein is Acetate kinase.